The sequence spans 455 residues: Enolase (455 aa).

Gln166 serves as a coordination point for (2R)-2-phosphoglycerate. Catalysis depends on Glu208, which acts as the Proton donor. Asp249, Glu311, and Asp338 together coordinate Mg(2+). Positions 363, 392, 393, and 414 each coordinate (2R)-2-phosphoglycerate. The active-site Proton acceptor is the Lys363.

Belongs to the enolase family. The cofactor is Mg(2+).

The protein resides in the cytoplasm. It is found in the secreted. It localises to the cell surface. The enzyme catalyses (2R)-2-phosphoglycerate = phosphoenolpyruvate + H2O. It participates in carbohydrate degradation; glycolysis; pyruvate from D-glyceraldehyde 3-phosphate: step 4/5. In terms of biological role, catalyzes the reversible conversion of 2-phosphoglycerate (2-PG) into phosphoenolpyruvate (PEP). It is essential for the degradation of carbohydrates via glycolysis. In Mycoplasma mobile (strain ATCC 43663 / 163K / NCTC 11711) (Mesomycoplasma mobile), this protein is Enolase.